The primary structure comprises 976 residues: Vacuolar membrane protease (976 aa).

Residues 1–15 (MKLKSVFRSVLKYRK) lie on the Cytoplasmic side of the membrane. The chain crosses the membrane as a helical span at residues 16–36 (TNLSLLLLITYSIITLLYIFD). The Vacuolar segment spans residues 37 to 359 (HERYKLNLPK…KFFVISAKTL (323 aa)). Residues Asn96 and Asn121 are each glycosylated (N-linked (GlcNAc...) asparagine). The Zn(2+) site is built by His156 and Asp168. A glycan (N-linked (GlcNAc...) asparagine) is linked at Asn189. Glu200 functions as the Proton acceptor in the catalytic mechanism. Zn(2+) is bound at residue Glu201. Residue Asn217 is glycosylated (N-linked (GlcNAc...) asparagine). Zn(2+) contacts are provided by Glu226 and His300. The chain crosses the membrane as a helical span at residues 360-380 (FYWNCIFLLVSPVVAIGLYLI). The Cytoplasmic segment spans residues 381 to 392 (SRDRMTWKSYSW). Residues 393-412 (LSWTRFPLSLAAGIIVQKLF) traverse the membrane as a helical segment. The Vacuolar segment spans residues 413–428 (SNDIIRSNPLTFSRNY). The chain crosses the membrane as a helical span at residues 429–449 (FWPISAFFTQVIFTSYVLINC). The Cytoplasmic portion of the chain corresponds to 450 to 461 (SNFFFPCADMKS). A helical membrane pass occupies residues 462–482 (LSIIELFIILWTILLFTSKLL). The Vacuolar portion of the chain corresponds to 483–496 (YSSDYRYTGLYPLS). The helical transmembrane segment at 497-517 (IFFLLSTIAAILRLLALALGM) threads the bilayer. The Cytoplasmic segment spans residues 518–627 (RTRKRLGREC…NSLKLEYTDY (110 aa)). Residues 528 to 610 (RDHHSNYSSH…PLLKGSNSME (83 aa)) form a disordered region. The segment covering 549–558 (NLEQPQDQLT) has biased composition (polar residues). Low complexity predominate over residues 559–570 (SSQDDQASIQDD). Over residues 582 to 601 (NVDEDHGMDSSSQQHDERVP) the composition is skewed to basic and acidic residues. Residues 628–648 (AWIIQFLLIVPIPSFILFNSV) form a helical membrane-spanning segment. The Vacuolar portion of the chain corresponds to 649–668 (DVIMDALNHTVQEGSKATFD). The N-linked (GlcNAc...) asparagine glycan is linked to Asn656. Residues 669–689 (VLRFGMVGSILIALPILPFFY) traverse the membrane as a helical segment. Residues 690-692 (KVN) lie on the Cytoplasmic side of the membrane. A helical membrane pass occupies residues 693–713 (YITISLTALLFLISASKTLLV). The Vacuolar portion of the chain corresponds to 714–976 (HPFTNSNPLK…LVIVKDAIIL (263 aa)). 5 N-linked (GlcNAc...) asparagine glycosylation sites follow: Asn768, Asn796, Asn811, Asn866, and Asn937.

The protein belongs to the peptidase M28 family. The cofactor is Zn(2+). N-glycosylated.

Its subcellular location is the vacuole membrane. Its function is as follows. May be involved in vacuolar sorting and osmoregulation. The polypeptide is Vacuolar membrane protease (Saccharomyces cerevisiae (strain ATCC 204508 / S288c) (Baker's yeast)).